Here is a 260-residue protein sequence, read N- to C-terminus: Methylesterase 7 (260 aa).

Catalysis depends on serine 84, which acts as the Acyl-ester intermediate. Active-site charge relay system residues include aspartate 210 and histidine 238.

It belongs to the AB hydrolase superfamily. Methylesterase family.

It carries out the reaction methyl (indol-3-yl)acetate + H2O = (indol-3-yl)acetate + methanol + H(+). The catalysed reaction is methyl salicylate + H2O = salicylate + methanol + H(+). Its pathway is plant hormone biosynthesis. With respect to regulation, esterase activity is down-regulated by salicylic acid (SA). Methylesterase shown to have carboxylesterase activity, methyl indole-3-acetic acid (MeIAA) esterase activity and methyl salicylate (MeSA) esterase activity in vitro. Required to convert methyl salicylate (MeSA) to salicylic acid (SA) as part of the signal transduction pathways that activate systemic acquired resistance in systemic tissue. MeSA is believed to be an inactive form that needs to be demethylated to exert a biological effect. The protein is Methylesterase 7 of Arabidopsis thaliana (Mouse-ear cress).